Consider the following 418-residue polypeptide: Putative ion-transport protein YfeO (418 aa).

The next 12 helical transmembrane spans lie at 10 to 30, 54 to 74, 99 to 119, 120 to 140, 149 to 169, 186 to 206, 223 to 243, 258 to 278, 300 to 320, 322 to 342, 343 to 363, and 371 to 391; these read LLLSLPAVAIGIASSLILIVV, DSPLWIIGVLTLTGIAVGLVI, ALPGLIVALILGLAGGVSLGP, EHPIMTVNIALAVAIGARLLP, ILASAGTIGALFGTPVAAALI, LFAPLMAAAAGALTTGLFFHP, ILSGAIVAAIAIAAGMVAVWC, VLVLGIGGFILGILGVIGGPV, DYFLLAVIKLAALVVAAASGF, GGRIFPAVFVGVALGLMLHEH, VPAVPAAITVSCAILGIVLVV, and LFMAAVVVPNTTLLPLLCIVM.

Belongs to the chloride channel (TC 2.A.49) family.

The protein localises to the cell membrane. The protein is Putative ion-transport protein YfeO of Shigella boydii serotype 18 (strain CDC 3083-94 / BS512).